A 448-amino-acid polypeptide reads, in one-letter code: Beclin-1 (448 aa).

Residue methionine 1 is modified to N-acetylmethionine. 2 positions are modified to phosphoserine: serine 14 and serine 29. Residues serine 88, serine 91, and serine 94 each carry the phosphoserine; by AMPK modification. Residues 106–125 (TMENLSRRLKVTGDLFDIMS) carry the BH3 motif. Residues 110–157 (LSRRLKVTGDLFDIMSGQTDVDHPLCEECTDTLLDQLDTQLNVTENEC) form an interaction with BCL2 and BCL2L1 region. Phosphothreonine; by DAPK1 is present on threonine 117. Residues 140-267 (DTLLDQLDTQ…QLDKLKKTNV (128 aa)) adopt a coiled-coil conformation. An evolutionary conserved domain (ECD) region spans residues 243–448 (DELKSVENQM…AWVSSQFYNK (206 aa)). Glycyl lysine isopeptide (Lys-Gly) (interchain with G-Cter in ubiquitin) cross-links involve residues lysine 400 and lysine 435. The tract at residues 423 to 448 (WTKALKFMLTNLKWGLAWVSSQFYNK) is required for membrane-association.

Belongs to the beclin family. A homodimeric form is proposed to exist; this metastable form readily transits to ATG14- or UVRAG-containing complexes with BECN1:UVRAG being more stable than BECN1:ATG14. Component of the PI3K (PI3KC3/PI3K-III/class III phosphatidylinositol 3-kinase) complex the core of which is composed of the catalytic subunit PIK3C3, the regulatory subunit PIK3R4 and BECN1 associating with additional regulatory/auxiliary subunits to form alternative complex forms. Alternative complex forms containing a fourth regulatory subunit in a mutually exclusive manner are PI3K complex I (PI3KC3-C1) containing ATG14, and PI3K complex II (PI3KC3-C2) containing UVRAG. PI3KC3-C1 displays a V-shaped architecture with PIK3R4 serving as a bridge between PIK3C3 and the ATG14:BECN1 subcomplex. Both, PI3KC3-C1 and PI3KC3-C2, can associate with further regulatory subunits, such as RUBCN, SH3GLB1/Bif-1 and AMBRA1. PI3KC3-C1 probably associates with PIK3CB. Forms a complex with PPP2CA and AMBRA1; AMBRA1 and BECN1 components of the complex regulate MYC stability via different pathways. Component of the complex, at least composed of LRPPRC, BECN1 and BCL2; the interactions prevent BECN1 from forming an autophagy-inducing complex with PIK3C3. Interacts with AMBRA1, GOPC, GRID2. Interacts with BCL2 and BCL2L1 isoform Bcl-X(L); the interaction inhibits BECN1 function in promoting autophagy by interfering with the formation of the PI3K complex. Interacts with cytosolic HMGB1; inhibits the interaction of BECN1 and BCL2 leading to promotion of autophagy. Interacts with USP10, USP13, VMP1, DAPK1, RAB39A. Interacts with the poly-Gln domain of ATXN3; the interaction causes deubiquitination at Lys-400 and stabilizes BECN1. Interacts with SLAMF1. Interacts with TRIM5; the interaction causes activation of BECN1 by causing its dissociation from its inhibitors BCL2 and TAB2. Interacts with active ULK1 (phosphorylated on 'Ser-317') and MEFV simultaneously. Interacts with WDR81 and WDR91; negatively regulates the PI3 kinase/PI3K activity associated with endosomal membranes. Interacts with LAPTM4B; competes with EGFR for LAPTM4B binding; regulates EGFR activity. Interacts with TRIM50. Interacts with TRIM16. Interacts with ATG14; this interaction is increased in the absence of TMEM39A. Interacts with WASHC1; preventing interaction with AMBRA1 and the DCX(AMBRA1) complex and subsequent ubiquitination. Interacts with TRIM17. Interacts with BCL2L10/BCL-B (via BH1 domain). Interacts with SH3BGRL. Interacts with IRGM; enhancing BECN1-interacting partners and influencing the composition of the BECN1 complex. Interacts with ARMC3. Interacts with LRPPRC. In terms of assembly, (Microbial infection) Interacts with African swine fever virus (ASFV) apoptosis regulator Bcl-2 homolog; this interaction allows the virus to inhibit BECN1, and thus autophagy. In terms of processing, phosphorylation at Thr-117 by DAPK1 reduces its interaction with BCL2 and BCL2L1 and promotes induction of autophagy. In response to autophagic stimuli, phosphorylated at serine residues by AMPK in an ATG14-dependent manner, and this phosphorylation is critical for maximally efficient autophagy. Polyubiquitinated by NEDD4, both with 'Lys-11'- and 'Lys-63'-linkages. 'Lys-11'-linked polyubiquitination leads to degradation and is enhanced when the stabilizing interaction partner VPS34 is depleted. Deubiquitinated by USP10 and USP13, leading to stabilize the PIK3C3/VPS34-containing complexes. Polyubiquitinated at Lys-400 with 'Lys-48'-linkages. 'Lys-48'-linked polyubiquitination of Lys-400 leads to degradation. Deubiquitinated by ATXN3, leading to stabilization. Ubiquitinated at Lys-435 via 'Lys-63'-linkage by the DCX(AMBRA1) complex, thereby increasing the association between BECN1 and PIK3C3 to promote PIK3C3 activity. 'Lys-48'-linked ubiquitination by RNF216 leads to proteasomal degradation and autophagy inhibition. Post-translationally, proteolytically processed by caspases including CASP8 and CASP3; the C-terminal fragments lack autophagy-inducing capacity and are proposed to induce apoptosis. Thus the cleavage is proposed to be an determinant to switch from autophagy to apoptosis pathways affecting cellular homeostasis including viral infections and survival of tumor cells.

It is found in the cytoplasm. The protein localises to the golgi apparatus. The protein resides in the trans-Golgi network membrane. It localises to the endosome membrane. Its subcellular location is the endoplasmic reticulum membrane. It is found in the mitochondrion membrane. The protein localises to the cytoplasmic vesicle. The protein resides in the autophagosome. It localises to the mitochondrion. Its subcellular location is the nucleus. Its function is as follows. Plays a central role in autophagy. Acts as a core subunit of the PI3K complex that mediates formation of phosphatidylinositol 3-phosphate; different complex forms are believed to play a role in multiple membrane trafficking pathways: PI3KC3-C1 is involved in initiation of autophagosomes and PI3KC3-C2 in maturation of autophagosomes and endocytosis. Involved in regulation of degradative endocytic trafficking and required for the abscission step in cytokinesis, probably in the context of PI3KC3-C2. Essential for the formation of PI3KC3-C2 but not PI3KC3-C1 PI3K complex forms. Involved in endocytosis. May play a role in antiviral host defense. In terms of biological role, beclin-1-C 35 kDa localized to mitochondria can promote apoptosis; it induces the mitochondrial translocation of BAX and the release of proapoptotic factors. This is Beclin-1 (BECN1) from Sus scrofa (Pig).